The following is a 92-amino-acid chain: Small ribosomal subunit protein uS19c (92 aa).

This sequence belongs to the universal ribosomal protein uS19 family.

The protein resides in the plastid. Its subcellular location is the chloroplast. Protein S19 forms a complex with S13 that binds strongly to the 16S ribosomal RNA. This chain is Small ribosomal subunit protein uS19c, found in Nymphaea alba (White water-lily).